The sequence spans 304 residues: Small glutamine-rich tetratricopeptide repeat-containing protein beta (304 aa).

TPR repeat units follow at residues 15 to 49 (LREQSQMDAYTSDEQESLEVAIQCLETVFKISPED), 85 to 118 (ADQLKDEGNNHMKEENYAAAVDCYTQAIELDPNN), 120 to 152 (VYYCNRAAAQSKLSHYTDAIKDCEKAIAIDSKY), and 153 to 186 (SKAYGRMGLALTAMNKFEEAVTSYQKALDLDPEN). Lysine 131 carries the N6-acetyllysine modification. Serine 293, serine 295, and serine 297 each carry phosphoserine.

The protein belongs to the SGT family. In terms of assembly, homooligomerize. In terms of tissue distribution, expressed specifically in brain.

Co-chaperone that binds directly to HSC70 and HSP70 and regulates their ATPase activity. This chain is Small glutamine-rich tetratricopeptide repeat-containing protein beta (Sgtb), found in Rattus norvegicus (Rat).